A 164-amino-acid chain; its full sequence is Peptidyl-prolyl cis-trans isomerase A-like 4D (164 aa).

Residues 7-163 (FFEITRDGKP…KKITIADCGQ (157 aa)) form the PPIase cyclophilin-type domain.

The protein belongs to the cyclophilin-type PPIase family. PPIase A subfamily.

The protein localises to the cytoplasm. It carries out the reaction [protein]-peptidylproline (omega=180) = [protein]-peptidylproline (omega=0). Its function is as follows. PPIases accelerate the folding of proteins. It catalyzes the cis-trans isomerization of proline imidic peptide bonds in oligopeptides. The protein is Peptidyl-prolyl cis-trans isomerase A-like 4D of Homo sapiens (Human).